Here is a 907-residue protein sequence, read N- to C-terminus: Putative pentatricopeptide repeat-containing protein At5g59900 (907 aa).

PPR repeat units lie at residues 103-137 (STASFCILIHALVKANLFWPASSLLQTLLLRALKP), 155-185 (SSSSFDLLIQHYVRSRRVLDGVLVFKMMITK), 191-225 (EVRTLSALLHGLVKFRHFGLAMELFNDMVSVGIRP), 226-260 (DVYIYTGVIRSLCELKDLSRAKEMIAHMEATGCDV), 261-295 (NIVPYNVLIDGLCKKQKVWEAVGIKKDLAGKDLKP), 296-330 (DVVTYCTLVYGLCKVQEFEIGLEMMDEMLCLRFSP), 331-365 (SEAAVSSLVEGLRKRGKIEEALNLVKRVVDFGVSP), 366-400 (NLFVYNALIDSLCKGRKFHEAELLFDRMGKIGLRP), 401-435 (NDVTYSILIDMFCRRGKLDTALSFLGEMVDTGLKL), 436-470 (SVYPYNSLINGHCKFGDISAAEGFMAEMINKKLEP), 471-505 (TVVTYTSLMGGYCSKGKINKALRLYHEMTGKGIAP), 506-540 (SIYTFTTLLSGLFRAGLIRDAVKLFNEMAEWNVKP), 541-575 (NRVTYNVMIEGYCEEGDMSKAFEFLKEMTEKGIVP), 576-610 (DTYSYRPLIHGLCLTGQASEAKVFVDGLHKGNCEL), 611-645 (NEICYTGLLHGFCREGKLEEALSVCQEMVQRGVDL), 646-680 (DLVCYGVLIDGSLKHKDRKLFFGLLKEMHDRGLKP), 681-715 (DDVIYTSMIDAKSKTGDFKEAFGIWDLMINEGCVP), 716-750 (NEVTYTAVINGLCKAGFVNEAEVLCSKMQPVSSVP), 751-782 (NQVTYGCFLDILTKGEVDMQKAVELHNAILKG), 786-820 (NTATYNMLIRGFCRQGRIEEASELITRMIGDGVSP), 821-855 (DCITYTTMINELCRRNDVKKAIELWNSMTEKGIRP), and 856-890 (DRVAYNTLIHGCCVAGEMGKATELRNEMLRQGLIP). Positions 887–907 (GLIPNNKTSRTTTSNDTSSKS) are disordered. The span at 891–907 (NNKTSRTTTSNDTSSKS) shows a compositional bias: low complexity.

Belongs to the PPR family. P subfamily.

The polypeptide is Putative pentatricopeptide repeat-containing protein At5g59900 (Arabidopsis thaliana (Mouse-ear cress)).